A 437-amino-acid polypeptide reads, in one-letter code: GTPase Obg (437 aa).

The Obg domain maps to 2 to 160 (SMFLDTAKIS…RQLELELKIL (159 aa)). Residues 161–338 (ADVGLVGFPS…LLEATAELLA (178 aa)) form the OBG-type G domain. GTP is bound by residues 167 to 174 (GFPSVGKS), 192 to 196 (FTTIV), 214 to 217 (DLPG), 284 to 287 (NKMD), and 319 to 321 (SSL). Mg(2+) is bound by residues Ser-174 and Thr-194. The 79-residue stretch at 359–437 (GFAETEKDFE…IGKFEFEFVD (79 aa)) folds into the OCT domain.

The protein belongs to the TRAFAC class OBG-HflX-like GTPase superfamily. OBG GTPase family. Monomer. Mg(2+) is required as a cofactor.

The protein resides in the cytoplasm. Its function is as follows. An essential GTPase which binds GTP, GDP and possibly (p)ppGpp with moderate affinity, with high nucleotide exchange rates and a fairly low GTP hydrolysis rate. Plays a role in control of the cell cycle, stress response, ribosome biogenesis and in those bacteria that undergo differentiation, in morphogenesis control. This chain is GTPase Obg, found in Streptococcus pyogenes serotype M4 (strain MGAS10750).